The primary structure comprises 225 residues: MLFIFLTIAALGLSFWAQFKVKSNFEKYSKVEASSGRTGAETARRILDINGLYDVPVEPVRGTLTDHYDPTRRVVRLSEPVYYGRSISAISVASHEVGHALQHQESYGALVLRHKIFPVVNFASGVAPLLFLGGMLLGSLNLIGLGIILFSAAVFFQLITLPVEFNASSRAKQIIVSEGFIRNNEENGVNKVLSAAALTYVAAALVSLFELLRFVMIFLNGRDEN.

H95 provides a ligand contact to Zn(2+). E96 is an active-site residue. Zn(2+) contacts are provided by H99 and H103. The next 3 helical transmembrane spans lie at 116 to 138, 140 to 162, and 192 to 212; these read IFPV…MLLG, LNLI…ITLP, and VLSA…FELL.

It is found in the cell membrane. This is Putative membrane protease YugP (yugP) from Bacillus subtilis (strain 168).